Here is a 553-residue protein sequence, read N- to C-terminus: MSSDDTVKQEHSCSADSEKQDSSCASDNEQPKEPQSPRNIHGLLWVVTILAIYSSTFLFALDNTIVANIQPAIISSLNGIEKLAWSGVAFVMASSATVLTWLQIFNQFNIKWMYIFSIAVFMGGSAICGAAQSMDMLIGGRVICGIGGVGQYVGVMNFLPRLTTMQERPMYVSAMGLTWGAGTVLGPIIGGAFTDSSAGWRWSFYINLVVGGLFAPVYIFLLPSLEPQPAGTTVSSRLKRMDLVGTLILFAAFAAGVIGINFAGAMYPWSEPGIIVAITLGGVLFIVFGIQQTYCILTTEETRLFPVELVSWRQPLLSLLFVCGCCTGVCVTVPTYVIPLYFQFTEGDESLQSGVRLLPFVCLLVFSCVSGGYLAGRLGYYIPWYIMGGGFCLIGSALMYTIKPSSGPGATYGYSSLIGLGSGMYLQLGHAVAQAKVKPEKVPAAVAFTTTAQLNGLTFALVLSQCVFVNEAAKRIGWILPHEPRSTIVDAISGTGSTFVQELPTATQNEVLGAIVTAIDRTYILCIVAAAVTLLATLGMKWERLFIEAAAAA.

The span at 1–21 shows a compositional bias: basic and acidic residues; the sequence is MSSDDTVKQEHSCSADSEKQD. Positions 1–36 are disordered; it reads MSSDDTVKQEHSCSADSEKQDSSCASDNEQPKEPQS. Helical transmembrane passes span 40–60, 85–105, 110–130, 136–156, 174–194, 202–222, 243–263, 270–290, 319–339, 355–375, 382–402, 413–433, and 522–542; these read IHGL…FLFA, WSGV…LQIF, IKWM…ICGA, MLIG…VGVM, AMGL…GAFT, WSFY…IFLL, LVGT…INFA, SEPG…VFGI, LLFV…YVIP, VRLL…GYLA, IPWY…MYTI, GYSS…HAVA, and TYIL…GMKW.

The protein belongs to the major facilitator superfamily. TCR/Tet family.

The protein localises to the cell membrane. In terms of biological role, efflux pump; part of the gene cluster that mediates the biosynthesis of asperlin, a polyketide showing anti-inflammatory, antitumor and antibiotic activities. Is probably involved in the efflux of asperlin. The sequence is that of Efflux pump alnA from Emericella nidulans (strain FGSC A4 / ATCC 38163 / CBS 112.46 / NRRL 194 / M139) (Aspergillus nidulans).